The chain runs to 112 residues: Nitrogenase-stabilizing/protective protein NifW (112 aa).

This sequence belongs to the NifW family. Homotrimer; associates with NifD.

May protect the nitrogenase Fe-Mo protein from oxidative damage. The sequence is that of Nitrogenase-stabilizing/protective protein NifW from Rhodopseudomonas palustris (strain BisA53).